Consider the following 87-residue polypeptide: MKLVVVQFFIISLLLTSSFSVLSSADSSCGGKCNVRCSKAGQHEECLKYCNICCQKCNCVPSGTFGHKDECPCYRDMKNSKGGSKCP.

Positions 1 to 25 (MKLVVVQFFIISLLLTSSFSVLSSA) are cleaved as a signal peptide.

This sequence belongs to the GASA family. In terms of processing, six disulfide bonds may be present. As to expression, expressed in roots and developing seeds.

It localises to the secreted. In terms of biological role, gibberellin-regulated protein that may function in hormonal controlled steps of development such as seed germination, flowering and seed maturation. The chain is Gibberellin-regulated protein 8 from Arabidopsis thaliana (Mouse-ear cress).